Consider the following 175-residue polypeptide: Succinate dehydrogenase assembly factor 2, mitochondrial (175 aa).

The segment at 42–71 (PFSDPELAHANNSLPSNSEEWPLPEPLDRT) is disordered. A compositionally biased stretch (polar residues) spans 51 to 60 (ANNSLPSNSE).

It belongs to the SDHAF2 family. Interacts with the flavoprotein subunit within the SDH catalytic dimer.

The protein resides in the mitochondrion matrix. Its function is as follows. Plays an essential role in the assembly of succinate dehydrogenase (SDH), an enzyme complex (also referred to as respiratory complex II) that is a component of both the tricarboxylic acid (TCA) cycle and the mitochondrial electron transport chain, and which couples the oxidation of succinate to fumarate with the reduction of ubiquinone (coenzyme Q) to ubiquinol. Required for flavinylation (covalent attachment of FAD) of the flavoprotein subunit of the SDH catalytic dimer. This chain is Succinate dehydrogenase assembly factor 2, mitochondrial, found in Cryptococcus neoformans var. neoformans serotype D (strain B-3501A) (Filobasidiella neoformans).